Reading from the N-terminus, the 142-residue chain is Large ribosomal subunit protein bL17 (142 aa).

Belongs to the bacterial ribosomal protein bL17 family. Part of the 50S ribosomal subunit. Contacts protein L32.

This Wolbachia pipientis subsp. Culex pipiens (strain wPip) protein is Large ribosomal subunit protein bL17.